The primary structure comprises 75 residues: Exodeoxyribonuclease 7 small subunit (75 aa).

Belongs to the XseB family. In terms of assembly, heterooligomer composed of large and small subunits.

The protein localises to the cytoplasm. It catalyses the reaction Exonucleolytic cleavage in either 5'- to 3'- or 3'- to 5'-direction to yield nucleoside 5'-phosphates.. Bidirectionally degrades single-stranded DNA into large acid-insoluble oligonucleotides, which are then degraded further into small acid-soluble oligonucleotides. This Listeria welshimeri serovar 6b (strain ATCC 35897 / DSM 20650 / CCUG 15529 / CIP 8149 / NCTC 11857 / SLCC 5334 / V8) protein is Exodeoxyribonuclease 7 small subunit.